Consider the following 62-residue polypeptide: MAKVCYFTGRKTVSGNNRSHAMNKTKRVVKPNLQKVTVLIDGKPKKVWASARALKSGKVERV.

The protein belongs to the bacterial ribosomal protein bL28 family.

The sequence is that of Large ribosomal subunit protein bL28 from Streptococcus thermophilus (strain CNRZ 1066).